The sequence spans 208 residues: Cytochrome c oxidase assembly protein CtaG (208 aa).

The Cytoplasmic portion of the chain corresponds to 1 to 19 (MSPPLPQAPQQPAPRRGLG). The chain crosses the membrane as a helical; Signal-anchor for type II membrane protein span at residues 20–42 (HDTAVAAVCGLVVALMVGASFAA). The Periplasmic portion of the chain corresponds to 43–208 (VPFYNWFCRT…SEPAPRKGNL (166 aa)).

This sequence belongs to the COX11/CtaG family.

It localises to the cell inner membrane. Exerts its effect at some terminal stage of cytochrome c oxidase synthesis, probably by being involved in the insertion of the copper B into subunit I. The chain is Cytochrome c oxidase assembly protein CtaG from Rhodopseudomonas palustris (strain TIE-1).